Here is an 87-residue protein sequence, read N- to C-terminus: MEPIFIIGIILGLVILLFLSGSAAKPLKWIGITAVKFVAGALLLVCVNMFGGSLGIHVPINLVTTAISGILGIPGIAALVVIKQFII.

At 1 to 2 (ME) the chain is on the forespore intermembrane space side. The chain crosses the membrane as a helical span at residues 3–23 (PIFIIGIILGLVILLFLSGSA). Residues 24–36 (AKPLKWIGITAVK) are Cytoplasmic-facing. A helical transmembrane segment spans residues 37–57 (FVAGALLLVCVNMFGGSLGIH). His57 contacts Zn(2+). Over 58–87 (VPINLVTTAISGILGIPGIAALVVIKQFII) the chain is Forespore intermembrane space.

Forms a complex with SpoIVFA and SpoIVFB localized in the mother cell membrane surrounding the forespore.

It localises to the forespore outer membrane. Its function is as follows. Involved in the mediation of the intercompartmental coupling of pro-sigma K processing to events in the forespore. Inhibits SpoIVFB-processing activity until a signal has been received from the forespore. Could inhibit SpoIVFB metalloprotease activity by coordinating a zinc in the SpoIVFB active site, preventing access of a water molecule and the sequence of pro-sigma K, which are necessary for peptide bond hydrolysis to produce sigma-K. In Bacillus subtilis (strain 168), this protein is Sigma-K factor-processing regulatory protein BofA (bofA).